A 152-amino-acid polypeptide reads, in one-letter code: Deoxyuridine 5'-triphosphate nucleotidohydrolase (152 aa).

Residues 71 to 73 (RSG), Asn84, 88 to 90 (LID), and Met98 contribute to the substrate site.

Belongs to the dUTPase family. Mg(2+) serves as cofactor.

The enzyme catalyses dUTP + H2O = dUMP + diphosphate + H(+). It functions in the pathway pyrimidine metabolism; dUMP biosynthesis; dUMP from dCTP (dUTP route): step 2/2. Its function is as follows. This enzyme is involved in nucleotide metabolism: it produces dUMP, the immediate precursor of thymidine nucleotides and it decreases the intracellular concentration of dUTP so that uracil cannot be incorporated into DNA. The protein is Deoxyuridine 5'-triphosphate nucleotidohydrolase of Shewanella woodyi (strain ATCC 51908 / MS32).